The sequence spans 831 residues: Translation initiation factor IF-2 (831 aa).

In terms of domain architecture, tr-type G spans 329-499 (TRAPVVTVMG…LLISEMQDLK (171 aa)). The tract at residues 338-345 (GHVDHGKT) is G1. 338–345 (GHVDHGKT) serves as a coordination point for GTP. The G2 stretch occupies residues 363–367 (GITQH). The tract at residues 385–388 (DTPG) is G3. Residues 385 to 389 (DTPGH) and 439 to 442 (NKID) each bind GTP. Positions 439-442 (NKID) are G4. The segment at 475–477 (SAL) is G5.

This sequence belongs to the TRAFAC class translation factor GTPase superfamily. Classic translation factor GTPase family. IF-2 subfamily.

The protein resides in the cytoplasm. Its function is as follows. One of the essential components for the initiation of protein synthesis. Protects formylmethionyl-tRNA from spontaneous hydrolysis and promotes its binding to the 30S ribosomal subunits. Also involved in the hydrolysis of GTP during the formation of the 70S ribosomal complex. The polypeptide is Translation initiation factor IF-2 (infB) (Rickettsia prowazekii (strain Madrid E)).